Consider the following 287-residue polypeptide: Homoserine kinase (287 aa).

78–88 (PLSRGLGSSST) lines the ATP pocket.

This sequence belongs to the GHMP kinase family. Homoserine kinase subfamily.

The protein resides in the cytoplasm. It carries out the reaction L-homoserine + ATP = O-phospho-L-homoserine + ADP + H(+). The protein operates within amino-acid biosynthesis; L-threonine biosynthesis; L-threonine from L-aspartate: step 4/5. Functionally, catalyzes the ATP-dependent phosphorylation of L-homoserine to L-homoserine phosphate. The chain is Homoserine kinase from Lactobacillus gasseri (strain ATCC 33323 / DSM 20243 / BCRC 14619 / CIP 102991 / JCM 1131 / KCTC 3163 / NCIMB 11718 / NCTC 13722 / AM63).